A 308-amino-acid chain; its full sequence is UDP-N-acetylenolpyruvoylglucosamine reductase (308 aa).

Residues Arg-35 to Met-200 form the FAD-binding PCMH-type domain. Arg-180 is an active-site residue. Over residues Glu-211–Thr-226 the composition is skewed to basic and acidic residues. Positions Glu-211 to Gly-236 are disordered. Residue Ser-229 is the Proton donor of the active site. Residue Glu-299 is part of the active site.

It belongs to the MurB family. It depends on FAD as a cofactor.

It is found in the cytoplasm. The enzyme catalyses UDP-N-acetyl-alpha-D-muramate + NADP(+) = UDP-N-acetyl-3-O-(1-carboxyvinyl)-alpha-D-glucosamine + NADPH + H(+). The protein operates within cell wall biogenesis; peptidoglycan biosynthesis. Cell wall formation. The chain is UDP-N-acetylenolpyruvoylglucosamine reductase from Rhodopseudomonas palustris (strain BisB18).